The following is a 220-amino-acid chain: tRNA (guanine-N(7)-)-methyltransferase (220 aa).

S-adenosyl-L-methionine-binding residues include glutamate 44, glutamate 69, aspartate 96, and aspartate 118. The active site involves aspartate 118. Position 122 (lysine 122) interacts with substrate. Residues 124-129 (RHEKRR) are interaction with RNA. Substrate-binding positions include aspartate 154 and 191–194 (TEYE).

This sequence belongs to the class I-like SAM-binding methyltransferase superfamily. TrmB family.

The catalysed reaction is guanosine(46) in tRNA + S-adenosyl-L-methionine = N(7)-methylguanosine(46) in tRNA + S-adenosyl-L-homocysteine. It participates in tRNA modification; N(7)-methylguanine-tRNA biosynthesis. Catalyzes the formation of N(7)-methylguanine at position 46 (m7G46) in tRNA. The sequence is that of tRNA (guanine-N(7)-)-methyltransferase from Halalkalibacterium halodurans (strain ATCC BAA-125 / DSM 18197 / FERM 7344 / JCM 9153 / C-125) (Bacillus halodurans).